The following is a 286-amino-acid chain: Beta-lactamase TEM (286 aa).

The first 23 residues, 1–23 (MSIQHFRVALIPFFAAFCLPVFA), serve as a signal peptide directing secretion. The active-site Acyl-ester intermediate is Ser68. Cys75 and Cys121 are joined by a disulfide. The active-site Proton acceptor is the Glu166. 232–234 (KSG) contributes to the substrate binding site.

Belongs to the class-A beta-lactamase family.

It carries out the reaction a beta-lactam + H2O = a substituted beta-amino acid. Functionally, TEM-type are the most prevalent beta-lactamases in enterobacteria; they hydrolyze the beta-lactam bond in susceptible beta-lactam antibiotics, thus conferring resistance to penicillins and cephalosporins. TEM-3 and TEM-4 are capable of hydrolyzing cefotaxime and ceftazidime. TEM-5 is capable of hydrolyzing ceftazidime. TEM-6 is capable of hydrolyzing ceftazidime and aztreonam. TEM-8/CAZ-2, TEM-16/CAZ-7 and TEM-24/CAZ-6 are markedly active against ceftazidime. IRT-4 shows resistance to beta-lactamase inhibitors. The chain is Beta-lactamase TEM (bla) from Escherichia coli.